Reading from the N-terminus, the 611-residue chain is Dihydroxy-acid dehydratase (611 aa).

Residue D81 coordinates Mg(2+). Position 122 (C122) interacts with [2Fe-2S] cluster. 2 residues coordinate Mg(2+): D123 and K124. K124 is modified (N6-carboxylysine). C195 contacts [2Fe-2S] cluster. A Mg(2+)-binding site is contributed by E491. S517 functions as the Proton acceptor in the catalytic mechanism.

This sequence belongs to the IlvD/Edd family. In terms of assembly, homodimer. [2Fe-2S] cluster is required as a cofactor. The cofactor is Mg(2+).

The catalysed reaction is (2R)-2,3-dihydroxy-3-methylbutanoate = 3-methyl-2-oxobutanoate + H2O. The enzyme catalyses (2R,3R)-2,3-dihydroxy-3-methylpentanoate = (S)-3-methyl-2-oxopentanoate + H2O. Its pathway is amino-acid biosynthesis; L-isoleucine biosynthesis; L-isoleucine from 2-oxobutanoate: step 3/4. It participates in amino-acid biosynthesis; L-valine biosynthesis; L-valine from pyruvate: step 3/4. In terms of biological role, functions in the biosynthesis of branched-chain amino acids. Catalyzes the dehydration of (2R,3R)-2,3-dihydroxy-3-methylpentanoate (2,3-dihydroxy-3-methylvalerate) into 2-oxo-3-methylpentanoate (2-oxo-3-methylvalerate) and of (2R)-2,3-dihydroxy-3-methylbutanoate (2,3-dihydroxyisovalerate) into 2-oxo-3-methylbutanoate (2-oxoisovalerate), the penultimate precursor to L-isoleucine and L-valine, respectively. The polypeptide is Dihydroxy-acid dehydratase (Brucella suis (strain ATCC 23445 / NCTC 10510)).